Consider the following 514-residue polypeptide: ATP synthase subunit alpha (514 aa).

Position 169–176 (169–176 (GDRQTGKT)) interacts with ATP.

The protein belongs to the ATPase alpha/beta chains family. In terms of assembly, F-type ATPases have 2 components, CF(1) - the catalytic core - and CF(0) - the membrane proton channel. CF(1) has five subunits: alpha(3), beta(3), gamma(1), delta(1), epsilon(1). CF(0) has three main subunits: a(1), b(2) and c(9-12). The alpha and beta chains form an alternating ring which encloses part of the gamma chain. CF(1) is attached to CF(0) by a central stalk formed by the gamma and epsilon chains, while a peripheral stalk is formed by the delta and b chains.

The protein localises to the cell membrane. The enzyme catalyses ATP + H2O + 4 H(+)(in) = ADP + phosphate + 5 H(+)(out). Functionally, produces ATP from ADP in the presence of a proton gradient across the membrane. The alpha chain is a regulatory subunit. The chain is ATP synthase subunit alpha from Buchnera aphidicola subsp. Baizongia pistaciae (strain Bp).